Reading from the N-terminus, the 245-residue chain is Probable phosphatase YcdX (245 aa).

Residues H7, H9, H15, H40, E73, H101, H131, D192, and H194 each contribute to the Zn(2+) site.

It belongs to the PHP family. Homotrimer. It depends on Zn(2+) as a cofactor.

The chain is Probable phosphatase YcdX from Salmonella agona (strain SL483).